An 84-amino-acid chain; its full sequence is Small ribosomal subunit protein bS20 (84 aa).

Positions 1-32 (MPRHESAKKRMRQNEKRQKRNKSQKSRVRTKI) are disordered.

Belongs to the bacterial ribosomal protein bS20 family.

In terms of biological role, binds directly to 16S ribosomal RNA. The protein is Small ribosomal subunit protein bS20 of Salinibacter ruber (strain DSM 13855 / M31).